A 158-amino-acid polypeptide reads, in one-letter code: Transcription elongation factor GreA (158 aa).

Residues 53–73 adopt a coiled-coil conformation; sequence EQQGFIEGRIKEIEAKLSNAQ.

Belongs to the GreA/GreB family.

In terms of biological role, necessary for efficient RNA polymerase transcription elongation past template-encoded arresting sites. The arresting sites in DNA have the property of trapping a certain fraction of elongating RNA polymerases that pass through, resulting in locked ternary complexes. Cleavage of the nascent transcript by cleavage factors such as GreA or GreB allows the resumption of elongation from the new 3'terminus. GreA releases sequences of 2 to 3 nucleotides. The sequence is that of Transcription elongation factor GreA from Thioalkalivibrio sulfidiphilus (strain HL-EbGR7).